Consider the following 323-residue polypeptide: Forkhead transcription factor fkh-6 (323 aa).

The fork-head DNA-binding region spans 21-122 (KPPYSYVALI…DNGNFKRRRV (102 aa)).

Its subcellular location is the nucleus. Probable transcription factor. Binds to the DNA sequence motif 5'-[TA]TGTT[TG]T[TG][ATG]TT-3'. Regulates sexual dimorphism in the gonad, promoting male gonadal cell fates in chromosomally (XO) male animals, yet plays a role in gonadogenesis in both sexes; probably acts downstream of terminal regulator of sex determination tra-1, to control early gonadogenesis. Positively modulates expression of homeobox protein egl-5, probably acting indirectly, during early gonadal development. The polypeptide is Forkhead transcription factor fkh-6 (Caenorhabditis elegans).